The sequence spans 1094 residues: DNA polymerase delta catalytic subunit (1094 aa).

Positions 1003, 1006, 1016, and 1019 each coordinate Zn(2+). A CysA-type zinc finger spans residues 1003–1019 (CIGCNSSIKKPPLCNHC). Cys-1049, Cys-1052, Cys-1062, and Cys-1067 together coordinate [4Fe-4S] cluster. A CysB motif motif is present at residues 1049–1067 (CQRCQGNLHVDVICMNRDC).

Belongs to the DNA polymerase type-B family. Heterodimer composed of a catalytic subunit POLD and a small regulatory subunit. It depends on [4Fe-4S] cluster as a cofactor. The cofactor is Mg(2+).

It is found in the nucleus. The enzyme catalyses DNA(n) + a 2'-deoxyribonucleoside 5'-triphosphate = DNA(n+1) + diphosphate. With respect to regulation, the small regulatory subunit delta and PCNA1 increase POLD catalytic activity. Its function is as follows. This polymerase possesses two enzymatic activities: DNA synthesis (polymerase) and an exonucleolytic activity that degrades single-stranded DNA in the 3'- to 5'-direction. The polypeptide is DNA polymerase delta catalytic subunit (POLD) (Plasmodium falciparum (isolate K1 / Thailand)).